Consider the following 645-residue polypeptide: Zinc finger protein 235 (645 aa).

Residues 8-86 (VTFRDVAVVF…TSHDVNKLAR (79 aa)) form the KRAB domain. Disordered regions lie at residues 112-144 (GAEQ…EFLS) and 255-280 (KKSP…SVHP). Residues 129 to 144 (LPSNHSSSSDNQEFLS) show a composition bias toward polar residues. C2H2-type zinc fingers lie at residues 285–307 (YWCH…QRVH), 313–335 (YRCD…RRVH), 341–363 (YKCE…ERIH), 369–391 (YKCG…QRVH), 397–419 (YECN…QRVH), 425–447 (YKCE…QRVH), 453–475 (FHCS…QRIH), 481–503 (YRCE…QSVH), 509–531 (YKCG…HSVH), 537–559 (FKCN…QRVH), 565–587 (YKCD…QRIH), 593–615 (FKCE…QRVH), and 621–643 (YTCQ…QRVH).

It belongs to the krueppel C2H2-type zinc-finger protein family.

It is found in the nucleus. May be involved in transcriptional regulation. The polypeptide is Zinc finger protein 235 (Znf235) (Mus musculus (Mouse)).